We begin with the raw amino-acid sequence, 548 residues long: Chaperonin GroEL (548 aa).

Residues 30–33, K51, 87–91, G415, 479–481, and D495 each bind ATP; these read TLGP, DGTTT, and NAA.

The protein belongs to the chaperonin (HSP60) family. In terms of assembly, forms a cylinder of 14 subunits composed of two heptameric rings stacked back-to-back. Interacts with the co-chaperonin GroES.

The protein resides in the cytoplasm. The catalysed reaction is ATP + H2O + a folded polypeptide = ADP + phosphate + an unfolded polypeptide.. Functionally, together with its co-chaperonin GroES, plays an essential role in assisting protein folding. The GroEL-GroES system forms a nano-cage that allows encapsulation of the non-native substrate proteins and provides a physical environment optimized to promote and accelerate protein folding. This Sodalis glossinidius (strain morsitans) protein is Chaperonin GroEL.